We begin with the raw amino-acid sequence, 418 residues long: Serine hydroxymethyltransferase (418 aa).

(6S)-5,6,7,8-tetrahydrofolate-binding positions include Leu121 and Gly125 to Leu127. Position 230 is an N6-(pyridoxal phosphate)lysine (Lys230). Ser355–Phe357 serves as a coordination point for (6S)-5,6,7,8-tetrahydrofolate.

It belongs to the SHMT family. In terms of assembly, homodimer. Pyridoxal 5'-phosphate is required as a cofactor.

The protein localises to the cytoplasm. It carries out the reaction (6R)-5,10-methylene-5,6,7,8-tetrahydrofolate + glycine + H2O = (6S)-5,6,7,8-tetrahydrofolate + L-serine. It participates in one-carbon metabolism; tetrahydrofolate interconversion. The protein operates within amino-acid biosynthesis; glycine biosynthesis; glycine from L-serine: step 1/1. Functionally, catalyzes the reversible interconversion of serine and glycine with tetrahydrofolate (THF) serving as the one-carbon carrier. This reaction serves as the major source of one-carbon groups required for the biosynthesis of purines, thymidylate, methionine, and other important biomolecules. Also exhibits THF-independent aldolase activity toward beta-hydroxyamino acids, producing glycine and aldehydes, via a retro-aldol mechanism. The chain is Serine hydroxymethyltransferase from Alcanivorax borkumensis (strain ATCC 700651 / DSM 11573 / NCIMB 13689 / SK2).